The following is a 62-amino-acid chain: Small acidic protein 1 (62 aa).

Interacts with the COP9 signalosome. In terms of tissue distribution, expressed in roots, flowers, siliques, stems, leaves and seeds. In flowers, detected in petals, anthers and pistils.

Functionally, mediates responses to the synthetic auxin 2,4-dichlorophenoxyacetic acid (2,4-D). Not involved in the response to indole-3-acetic acid (IAA). Interacts with RUB modification-related components and may regulate the cullin-ring ubiquitin E3 ligase complex (CRL) activity. This chain is Small acidic protein 1 (SMAP1), found in Arabidopsis thaliana (Mouse-ear cress).